The primary structure comprises 151 residues: MAKINFYAEGVSLPRIRRRIVGKWIAEVCSRYGKAVGEISYLFCDDEYILKANQEFLDHDYYTDIITFDSCEADTVNGDLLISLDTVRSNARALDLRYEDELHRVIIHGILHLCGLKDKSKKDEAQMRAAEEKALVMLRETIGSELSLLHT.

Positions 108, 112, and 118 each coordinate Zn(2+).

Belongs to the endoribonuclease YbeY family. It depends on Zn(2+) as a cofactor.

The protein localises to the cytoplasm. In terms of biological role, single strand-specific metallo-endoribonuclease involved in late-stage 70S ribosome quality control and in maturation of the 3' terminus of the 16S rRNA. This chain is Endoribonuclease YbeY, found in Porphyromonas gingivalis (strain ATCC BAA-308 / W83).